The primary structure comprises 299 residues: NEDD8-activating enzyme E1 catalytic subunit (299 aa).

ATP is bound at residue 12-37 (GLGCEILKNLTMLSFVKQVHIVDIDT). The active-site Glycyl thioester intermediate is the Cys168.

Belongs to the ubiquitin-activating E1 family. UBA3 subfamily. Heterodimer of UBA3 and ULA1. Interacts with NEDD8 and UBC12.

The enzyme catalyses ATP + [NEDD8 protein] + [E1 NEDD8-activating enzyme]-L-cysteine = AMP + diphosphate + [E1 NEDD8-activating enzyme]-S-[NEDD8 protein]-yl-L-cysteine.. It participates in protein modification; protein neddylation. In terms of biological role, catalytic subunit of the dimeric UBA3-ULA1 E1 enzyme. E1 activates NEDD8/RUB1 by first adenylating its C-terminal glycine residue with ATP, thereafter linking this residue to the side chain of the catalytic cysteine, yielding a NEDD8-UBA3 thioester and free AMP. E1 finally transfers NEDD8 to the catalytic cysteine of UBC12. The polypeptide is NEDD8-activating enzyme E1 catalytic subunit (UBA3) (Saccharomyces cerevisiae (strain ATCC 204508 / S288c) (Baker's yeast)).